We begin with the raw amino-acid sequence, 144 residues long: Large ribosomal subunit protein uL11 (144 aa).

This sequence belongs to the universal ribosomal protein uL11 family. Part of the ribosomal stalk of the 50S ribosomal subunit. Interacts with L10 and the large rRNA to form the base of the stalk. L10 forms an elongated spine to which L12 dimers bind in a sequential fashion forming a multimeric L10(L12)X complex. One or more lysine residues are methylated.

Forms part of the ribosomal stalk which helps the ribosome interact with GTP-bound translation factors. In Neisseria meningitidis serogroup B (strain ATCC BAA-335 / MC58), this protein is Large ribosomal subunit protein uL11.